Here is a 350-residue protein sequence, read N- to C-terminus: Transmembrane protein 185A (350 aa).

7 helical membrane passes run 16–36, 41–61, 81–101, 111–131, 177–197, 211–231, and 240–260; these read LIYA…DGII, WAVF…ASVG, FKAM…EVLV, FWLL…AACV, ILMS…VLFL, ITMA…EILL, and AFSC…LMAT. Residues 298-350 form a mediates interaction with MAP1B region; that stretch reads DLHHEDSEETEETPVPEPPKIAPMFRKKARVVITQSPGKYVLPPPKLNIEMPD.

Belongs to the TMEM185 family. In terms of assembly, interacts with MAP1B. Broadly expressed in brain where it is specifically expressed by neurons (at protein level). Also detected in some cells of arterioles, intestine, lung and testis (at protein level).

It localises to the cell projection. It is found in the dendrite. Its subcellular location is the membrane. The protein is Transmembrane protein 185A (Tmem185a) of Mus musculus (Mouse).